We begin with the raw amino-acid sequence, 657 residues long: Threonine--tRNA ligase (657 aa).

Residues 7–70 (QQASIAITLP…LCDANIEIVT (64 aa)) form the TGS domain. Positions 253–555 (DHRKLGTELE…LIEHTAGNFP (303 aa)) are catalytic. 3 residues coordinate Zn(2+): Cys-351, His-402, and His-532.

It belongs to the class-II aminoacyl-tRNA synthetase family. As to quaternary structure, homodimer. Requires Zn(2+) as cofactor.

It localises to the cytoplasm. The catalysed reaction is tRNA(Thr) + L-threonine + ATP = L-threonyl-tRNA(Thr) + AMP + diphosphate + H(+). In terms of biological role, catalyzes the attachment of threonine to tRNA(Thr) in a two-step reaction: L-threonine is first activated by ATP to form Thr-AMP and then transferred to the acceptor end of tRNA(Thr). Also edits incorrectly charged L-seryl-tRNA(Thr). The protein is Threonine--tRNA ligase of Chlorobium limicola (strain DSM 245 / NBRC 103803 / 6330).